A 301-amino-acid polypeptide reads, in one-letter code: Nucleotide-binding protein Mb1456 (301 aa).

Residue 24–31 participates in ATP binding; it reads GLSGAGRG. 75 to 78 contributes to the GTP binding site; the sequence is DVRS.

This sequence belongs to the RapZ-like family.

Displays ATPase and GTPase activities. In Mycobacterium bovis (strain ATCC BAA-935 / AF2122/97), this protein is Nucleotide-binding protein Mb1456.